The chain runs to 251 residues: Triosephosphate isomerase (251 aa).

9–11 provides a ligand contact to substrate; it reads NWK. H94 serves as the catalytic Electrophile. E166 functions as the Proton acceptor in the catalytic mechanism. Residues G172, S211, and 232-233 each bind substrate; that span reads GG.

The protein belongs to the triosephosphate isomerase family. As to quaternary structure, homodimer.

Its subcellular location is the cytoplasm. The enzyme catalyses D-glyceraldehyde 3-phosphate = dihydroxyacetone phosphate. Its pathway is carbohydrate biosynthesis; gluconeogenesis. It functions in the pathway carbohydrate degradation; glycolysis; D-glyceraldehyde 3-phosphate from glycerone phosphate: step 1/1. Functionally, involved in the gluconeogenesis. Catalyzes stereospecifically the conversion of dihydroxyacetone phosphate (DHAP) to D-glyceraldehyde-3-phosphate (G3P). The protein is Triosephosphate isomerase of Xanthomonas oryzae pv. oryzae (strain MAFF 311018).